The sequence spans 434 residues: Putative B3 domain-containing protein Os04g0347400 (434 aa).

DNA-binding regions (TF-B3) lie at residues 27-124 (SFHK…FDTT), 150-246 (KPQF…FGIN), and 326-432 (WIKK…DRVE).

The protein localises to the nucleus. In Oryza sativa subsp. japonica (Rice), this protein is Putative B3 domain-containing protein Os04g0347400.